Consider the following 230-residue polypeptide: Ribonuclease 3 (230 aa).

Residues 1–134 (MKQLEELLST…FLGALLLDKG (134 aa)) form the RNase III domain. Glutamate 47 is a binding site for Mg(2+). Aspartate 51 is a catalytic residue. Residues aspartate 120 and glutamate 123 each contribute to the Mg(2+) site. Residue glutamate 123 is part of the active site. Positions 160–229 (DYKTCLQEFL…AKNALAQLSE (70 aa)) constitute a DRBM domain.

It belongs to the ribonuclease III family. Homodimer. Mg(2+) is required as a cofactor.

It is found in the cytoplasm. It carries out the reaction Endonucleolytic cleavage to 5'-phosphomonoester.. Digests double-stranded RNA. Involved in the processing of primary rRNA transcript to yield the immediate precursors to the large and small rRNAs (23S and 16S). Processes some mRNAs, and tRNAs when they are encoded in the rRNA operon. Processes pre-crRNA and tracrRNA of type II CRISPR loci if present in the organism. The polypeptide is Ribonuclease 3 (Streptococcus pyogenes serotype M28 (strain MGAS6180)).